Reading from the N-terminus, the 98-residue chain is NADH-ubiquinone oxidoreductase chain 4L (98 aa).

The next 3 membrane-spanning stretches (helical) occupy residues 2–22 (PSISININLAFAAALLGMLMF), 29–49 (SLLCLEGMMLSMFTLSTLTIL), and 61–81 (ILLLVFAACEAAIGLALLVMV).

This sequence belongs to the complex I subunit 4L family. Core subunit of respiratory chain NADH dehydrogenase (Complex I) which is composed of 45 different subunits.

It is found in the mitochondrion inner membrane. It carries out the reaction a ubiquinone + NADH + 5 H(+)(in) = a ubiquinol + NAD(+) + 4 H(+)(out). Its function is as follows. Core subunit of the mitochondrial membrane respiratory chain NADH dehydrogenase (Complex I) which catalyzes electron transfer from NADH through the respiratory chain, using ubiquinone as an electron acceptor. Part of the enzyme membrane arm which is embedded in the lipid bilayer and involved in proton translocation. In Microcebus mittermeieri (Mittermeier's mouse lemur), this protein is NADH-ubiquinone oxidoreductase chain 4L (MT-ND4L).